Here is a 404-residue protein sequence, read N- to C-terminus: Probable tRNA sulfurtransferase (404 aa).

The 106-residue stretch at 61-166 folds into the THUMP domain; the sequence is EAVSERLKDV…SGYSYIMCDE (106 aa). ATP-binding positions include 184–185, 209–210, arginine 266, glycine 288, and glutamine 297; these read LL and HF.

Belongs to the ThiI family.

Its subcellular location is the cytoplasm. The enzyme catalyses [ThiI sulfur-carrier protein]-S-sulfanyl-L-cysteine + a uridine in tRNA + 2 reduced [2Fe-2S]-[ferredoxin] + ATP + H(+) = [ThiI sulfur-carrier protein]-L-cysteine + a 4-thiouridine in tRNA + 2 oxidized [2Fe-2S]-[ferredoxin] + AMP + diphosphate. It carries out the reaction [ThiS sulfur-carrier protein]-C-terminal Gly-Gly-AMP + S-sulfanyl-L-cysteinyl-[cysteine desulfurase] + AH2 = [ThiS sulfur-carrier protein]-C-terminal-Gly-aminoethanethioate + L-cysteinyl-[cysteine desulfurase] + A + AMP + 2 H(+). It functions in the pathway cofactor biosynthesis; thiamine diphosphate biosynthesis. Its function is as follows. Catalyzes the ATP-dependent transfer of a sulfur to tRNA to produce 4-thiouridine in position 8 of tRNAs, which functions as a near-UV photosensor. Also catalyzes the transfer of sulfur to the sulfur carrier protein ThiS, forming ThiS-thiocarboxylate. This is a step in the synthesis of thiazole, in the thiamine biosynthesis pathway. The sulfur is donated as persulfide by IscS. The protein is Probable tRNA sulfurtransferase of Bacillus cereus (strain AH187).